A 262-amino-acid polypeptide reads, in one-letter code: Hemin import ATP-binding protein HmuV (262 aa).

Positions 3–244 constitute an ABC transporter domain; the sequence is LQARNLTLAR…DHMRRVYGIE (242 aa). 35 to 42 is an ATP binding site; it reads GANGAGKS.

It belongs to the ABC transporter superfamily. Heme (hemin) importer (TC 3.A.1.14.5) family. The complex is composed of two ATP-binding proteins (HmuV), two transmembrane proteins (HmuU) and a solute-binding protein (HmuT).

It is found in the cell inner membrane. In terms of biological role, part of the ABC transporter complex HmuTUV involved in hemin import. Responsible for energy coupling to the transport system. In Bordetella parapertussis (strain 12822 / ATCC BAA-587 / NCTC 13253), this protein is Hemin import ATP-binding protein HmuV.